Here is a 345-residue protein sequence, read N- to C-terminus: NADPH dehydrogenase (345 aa).

23-26 is a binding site for FMN; that stretch reads SPMC. Residue Tyr-28 coordinates substrate. FMN-binding residues include Ala-60 and Gln-102. 164-167 is a substrate binding site; it reads HGAH. Residues Arg-215 and 307–308 each bind FMN; that span reads GR.

This sequence belongs to the NADH:flavin oxidoreductase/NADH oxidase family. NamA subfamily. In terms of assembly, homotetramer. The cofactor is FMN.

The catalysed reaction is A + NADPH + H(+) = AH2 + NADP(+). Catalyzes the reduction of the double bond of an array of alpha,beta-unsaturated aldehydes and ketones. It also reduces the nitro group of nitroester and nitroaromatic compounds. It could have a role in detoxification processes. This is NADPH dehydrogenase from Bacillus cereus (strain ZK / E33L).